Consider the following 851-residue polypeptide: Probable alpha,alpha-trehalose-phosphate synthase [UDP-forming] 7 (851 aa).

The residue at position 5 (serine 5) is a Phosphoserine. Threonine 32 is subject to Phosphothreonine. Residues 59–540 (DRMIIVANRL…SRSFLQDLER (482 aa)) are glycosyltransferase.

The protein in the N-terminal section; belongs to the glycosyltransferase 20 family. It in the C-terminal section; belongs to the trehalose phosphatase family. Binds to the phosphopeptide-binding site of GRF/14-3-3. Post-translationally, phosphorylated. In terms of tissue distribution, expressed in seedlings, leaves, roots, stems, flowers and siliques.

It catalyses the reaction D-glucose 6-phosphate + UDP-alpha-D-glucose = alpha,alpha-trehalose 6-phosphate + UDP + H(+). The polypeptide is Probable alpha,alpha-trehalose-phosphate synthase [UDP-forming] 7 (TPS7) (Arabidopsis thaliana (Mouse-ear cress)).